Consider the following 178-residue polypeptide: N-alpha-acetyltransferase 80 (178 aa).

Residues 26 to 178 (VPIHNYPELM…AKKKYMKKVL (153 aa)) form the N-acetyltransferase domain. Substrate-binding positions include Arg-48, 53–56 (RMRS), Asn-88, and Ser-98. Acetyl-CoA is bound by residues 99-101 (VVV) and 107-112 (GQGFGK). Ser-134 contacts substrate. Gln-138 contacts acetyl-CoA.

It belongs to the acetyltransferase family.

It carries out the reaction N-terminal L-aspartyl-L-aspartyl-L-aspartyl-[protein] + acetyl-CoA = N-terminal N-acetyl-L-aspartyl-L-aspartyl-L-aspartyl-[protein] + CoA + H(+). It catalyses the reaction N-terminal L-glutamyl-L-glutamyl-L-glutamyl-[protein] + acetyl-CoA = N-terminal N-acetyl-L-glutamyl-L-glutamyl-L-glutamyl-[protein] + CoA + H(+). Its function is as follows. N-alpha-acetyltransferase that acetylates the amino terminal acidic residue of proteins devoid of initiator methionine. Preferentially acts on proteins starting with Asp-Asp-Asp and Glu-Glu-Glu sequences. In vitro, shows high activity towards N-terminal sequences starting with Met-Asp-Glu-Leu, Met-Glu-Glu-Glu and Met-Asp-Asp-Asp. The protein is N-alpha-acetyltransferase 80 of Drosophila melanogaster (Fruit fly).